The primary structure comprises 366 residues: Fe-S cluster assembly protein DRE2 (366 aa).

The tract at residues 8-167 (AQGSGRFLLL…KPDFGAQQAV (160 aa)) is N-terminal SAM-like domain. The interval 100-136 (RNRDNQIWGSGSDSAAGLGSSDGGGGGGGGEKKSSSE) is disordered. A compositionally biased stretch (low complexity) spans 108-118 (GSGSDSAAGLG). Gly residues predominate over residues 119–128 (SSDGGGGGGG). A linker region spans residues 168-258 (PLKLGRKKNL…EEELLGEFDM (91 aa)). 4 residues coordinate [2Fe-2S] cluster: cysteine 268, cysteine 279, cysteine 282, and cysteine 284. The segment at 268-284 (CRPKAGKRRRACKDCTC) is fe-S binding site A. Residues cysteine 329, cysteine 332, cysteine 340, and cysteine 343 each coordinate [4Fe-4S] cluster. 2 short sequence motifs (cx2C motif) span residues 329–332 (CGNC) and 340–343 (CDGC). Residues 329–343 (CGNCALGDAFRCDGC) form a fe-S binding site B region.

Belongs to the anamorsin family. Monomer. Interacts with TAH18. Interacts with MIA40. The cofactor is [2Fe-2S] cluster. Requires [4Fe-4S] cluster as cofactor.

Its subcellular location is the cytoplasm. The protein resides in the mitochondrion intermembrane space. Component of the cytosolic iron-sulfur (Fe-S) protein assembly (CIA) machinery required for the maturation of extramitochondrial Fe-S proteins. Part of an electron transfer chain functioning in an early step of cytosolic Fe-S biogenesis, facilitating the de novo assembly of a [4Fe-4S] cluster on the scaffold complex CFD1-NBP35. Electrons are transferred to DRE2 from NADPH via the FAD- and FMN-containing protein TAH18. TAH18-DRE2 are also required for the assembly of the diferric tyrosyl radical cofactor of ribonucleotide reductase (RNR), probably by providing electrons for reduction during radical cofactor maturation in the catalytic small subunit RNR2. The chain is Fe-S cluster assembly protein DRE2 from Paracoccidioides lutzii (strain ATCC MYA-826 / Pb01) (Paracoccidioides brasiliensis).